A 648-amino-acid chain; its full sequence is MKEFKFNDEQLSTIQELEVDIDLKKLEIAISKESIDELSEDELLALLKVTNALYRSGFPVIEDILYDSFWNKFALNHPNHPFITSVETEVLNLGKTVALPQKMLSTDKAYSKEEIKKWLDRILKAAEELDIDTNEIEIRITPKLDGYAAFDDGERLYTRGDGVKGQDVSRAFERGLKVVRNSERGLGAGEIVINKAYFEKKLSQYFENSRNIQAAIIAEKNVDERVLEAIKEGACVFHPFAVLPNWTGNYQDLMTDFDGIIEQVWNSVEYDVDGVILEATDTRIKEHMGANRKFHRWQIAFKINDEVAEVEVISVTPQTSRTGRVTPVAELVPTRISGAMISRVTVHHYNMVKINGVGPGAIVQIVRSGLVIPKIEKVIKPVDPQMPELCPSCKSHLLWESDHLVCPNKSDCPAQTENTLVHFFKTLANNDGFGPKNIEKLANLGVKHIHQMYDLKPHQFAMYGFGEKTSKNLYDQLQASKNIEIEDWRFLSAFGVSRLGGGNCEKLLQHYSLRELFEATVEDIAELNGFARVSAEAIVKGLANIKEEFFKVYDLGFNLSITPKQSELESLASPLTGKIVVFTGKMLQGKRSDMEKHAKALGAKVGTSVTSNTTYLIAGLKVGETKINDAKEKGVKVLSEQEYLDLIS.

NAD(+) is bound by residues 63–67 (DILYD) and 105–106 (ST). Catalysis depends on Lys-143, which acts as the N6-AMP-lysine intermediate. NAD(+) contacts are provided by Arg-159, Glu-190, and Lys-302. Zn(2+) contacts are provided by Cys-390, Cys-393, Cys-406, and Cys-412. One can recognise a BRCT domain in the interval 570–648 (SLASPLTGKI…SEQEYLDLIS (79 aa)).

The protein belongs to the NAD-dependent DNA ligase family. LigA subfamily. Requires Mg(2+) as cofactor. The cofactor is Mn(2+).

It carries out the reaction NAD(+) + (deoxyribonucleotide)n-3'-hydroxyl + 5'-phospho-(deoxyribonucleotide)m = (deoxyribonucleotide)n+m + AMP + beta-nicotinamide D-nucleotide.. DNA ligase that catalyzes the formation of phosphodiester linkages between 5'-phosphoryl and 3'-hydroxyl groups in double-stranded DNA using NAD as a coenzyme and as the energy source for the reaction. It is essential for DNA replication and repair of damaged DNA. This Shewanella baltica (strain OS155 / ATCC BAA-1091) protein is DNA ligase.